The chain runs to 718 residues: Mitochondrial potassium channel ATP-binding subunit (718 aa).

Residues 1–25 (MLVHLFRVGIRGGPFPGRLLPPLRF) constitute a mitochondrion transit peptide. A run of 3 helical transmembrane segments spans residues 128 to 148 (LLVL…NVQI), 179 to 199 (THLL…LVLL), and 279 to 299 (LLLM…GSGL). One can recognise an ABC transmembrane type-1 domain in the interval 133 to 420 (VAVVLALGAA…LSVLFGQVVR (288 aa)). Positions 455 to 692 (VTFQNVCFSY…GGLYAELIRR (238 aa)) constitute an ABC transporter domain. 490-497 (GQSGGGKT) is a binding site for ATP. Residues 697-718 (APRTAAPLPKKPEGPRNHQHKS) are disordered.

It belongs to the ABC transporter superfamily. ABCB family. Multidrug resistance exporter (TC 3.A.1.201) subfamily. In terms of assembly, the mitochondrial potassium channel (mitoK(ATP)) is composed of 4 subunits of CCDC51/MITOK and 4 subunits of ABCB8/MITOSUR. Physically interacts with PAAT. Interacts with Neuropilin-1 (NRP1) in mitochondria.

Its subcellular location is the mitochondrion inner membrane. With respect to regulation, channel activity inhibited by ATP via ABCB8/MITOSUR subunit. ATP-binding subunit of the mitochondrial ATP-gated potassium channel (mitoK(ATP)). Together with pore-forming subunit CCDC51/MITOK of the mitoK(ATP) channel, mediates ATP-dependent potassium currents across the mitochondrial inner membrane. An increase in ATP intracellular levels closes the channel, inhibiting K(+) transport, whereas a decrease in ATP levels enhances K(+) uptake in the mitochondrial matrix. Plays a role in mitochondrial iron transport. Required for maintenance of normal cardiac function, possibly by influencing mitochondrial iron export and regulating the maturation of cytosolic iron sulfur cluster-containing enzymes. In Pongo abelii (Sumatran orangutan), this protein is Mitochondrial potassium channel ATP-binding subunit (ABCB8).